The sequence spans 357 residues: Cholinesterase 1 (357 aa).

The Acyl-ester intermediate role is filled by Ser112. Cys166 and Cys179 are disulfide-bonded. Active-site charge relay system residues include Glu244 and His357.

This sequence belongs to the type-B carboxylesterase/lipase family.

It catalyses the reaction an acylcholine + H2O = a carboxylate + choline + H(+). The chain is Cholinesterase 1 (CHE1) from Branchiostoma lanceolatum (Common lancelet).